The chain runs to 284 residues: CBY1-interacting BAR domain-containing protein 1-A (284 aa).

A mitochondrion-targeting transit peptide spans 1–48; the sequence is MSQTPEARARDNQTRQIQESVNNVEKHFGELCQIFAGYVRKTARLRDK. A BAR-like region spans residues 11–221; sequence DNQTRQIQES…DIDEEEDLEV (211 aa). 2 coiled-coil regions span residues 142-184 and 260-284; these read RQII…IKKL and NRQK…EDEN. The segment covering 242 to 261 has biased composition (polar residues); that stretch reads SRTGSTSRGPSVISQPPGNR. Residues 242–284 form a disordered region; that stretch reads SRTGSTSRGPSVISQPPGNRQKNRIEDEDEEEEDDENSTEDEN. Over residues 267–284 the composition is skewed to acidic residues; sequence EDEDEEEEDDENSTEDEN.

It belongs to the CIBAR family.

Its subcellular location is the cytoplasm. The protein resides in the cytoskeleton. It localises to the microtubule organizing center. The protein localises to the centrosome. It is found in the centriole. Its subcellular location is the nucleus. The protein resides in the mitochondrion inner membrane. It localises to the cell projection. The protein localises to the cilium. It is found in the flagellum. Functionally, plays a critical role in regulating mitochondrial ultrastructure and function by maintaining the integrity of mitochondrial morphology, particularly the organization of cristae. Plays a crucial role in ciliogenesis. Plays a key role in the correct positioning of the annulus, a septin-based ring structure in the sperm flagellum, serving both as a physical barrier and a membrane diffusion barrier that separates the midpiece (MP) from the principal piece (PP). The chain is CBY1-interacting BAR domain-containing protein 1-A from Xenopus laevis (African clawed frog).